The sequence spans 946 residues: Protein translocase subunit SecA (946 aa).

ATP-binding positions include glutamine 90, 108–112, and aspartate 509; that span reads GEGKT.

The protein belongs to the SecA family. In terms of assembly, monomer and homodimer. Part of the essential Sec protein translocation apparatus which comprises SecA, SecYEG and auxiliary proteins SecDF. Other proteins may also be involved.

Its subcellular location is the cell inner membrane. It is found in the cellular thylakoid membrane. The protein localises to the cytoplasm. The enzyme catalyses ATP + H2O + cellular proteinSide 1 = ADP + phosphate + cellular proteinSide 2.. Functionally, part of the Sec protein translocase complex. Interacts with the SecYEG preprotein conducting channel. Has a central role in coupling the hydrolysis of ATP to the transfer of proteins into and across the cell membrane, serving as an ATP-driven molecular motor driving the stepwise translocation of polypeptide chains across the membrane. Probably participates in protein translocation into and across both the cytoplasmic and thylakoid membranes in cyanobacterial cells. The protein is Protein translocase subunit SecA of Synechococcus sp. (strain RCC307).